Consider the following 714-residue polypeptide: Methylmalonyl-CoA mutase (714 aa).

A B12-binding domain is found at 584–714 (RPRILIAKMG…VLNLISQHHD (131 aa)). Adenosylcob(III)alamin is bound at residue H597.

Belongs to the methylmalonyl-CoA mutase family. In terms of assembly, homodimer. Interacts with ArgK. Adenosylcob(III)alamin is required as a cofactor.

It catalyses the reaction (R)-methylmalonyl-CoA = succinyl-CoA. Its function is as follows. Catalyzes the interconversion of succinyl-CoA and methylmalonyl-CoA. Could be part of a pathway that converts succinate to propionate. This is Methylmalonyl-CoA mutase (scpA) from Escherichia coli (strain K12).